A 30-amino-acid polypeptide reads, in one-letter code: L-amino-acid oxidase (30 aa).

The protein belongs to the flavin monoamine oxidase family. FIG1 subfamily. In terms of assembly, monomer. This is in contrast with most of its orthologs, that are non-covalently linked homodimers. FAD serves as cofactor. In terms of processing, N-glycosylated. As to expression, expressed by the venom gland.

It localises to the secreted. The catalysed reaction is an L-alpha-amino acid + O2 + H2O = a 2-oxocarboxylate + H2O2 + NH4(+). The enzyme catalyses L-leucine + O2 + H2O = 4-methyl-2-oxopentanoate + H2O2 + NH4(+). It carries out the reaction L-phenylalanine + O2 + H2O = 3-phenylpyruvate + H2O2 + NH4(+). It catalyses the reaction L-tryptophan + O2 + H2O = indole-3-pyruvate + H2O2 + NH4(+). The catalysed reaction is L-methionine + O2 + H2O = 4-methylsulfanyl-2-oxobutanoate + H2O2 + NH4(+). The enzyme catalyses L-2-aminohexanoate + O2 + H2O = 2-oxohexanoate + H2O2 + NH4(+). It carries out the reaction L-tyrosine + O2 + H2O = 3-(4-hydroxyphenyl)pyruvate + H2O2 + NH4(+). Its function is as follows. Catalyzes an oxidative deamination of predominantly hydrophobic and aromatic L-amino acids, thus producing hydrogen peroxide that may contribute to the diverse toxic effects of this enzyme. Is highly active against L-Met, L-Leu, L-norleucine (L-2-aminohexanoate), L-Trp, L-Phe, moderately active against L-Tyr, and no active on L-Gly, L-Ala, L-Val, L-Pro, L-His, L-Lys, L-Arg, L-Asp, L-Asn, L-Gln, L-Glu, L-Ser, and L-Thr. Exhibits diverse biological activities, such as hemorrhage, hemolysis, edema, antibacterial and antiparasitic activities. In addition, this protein induces apoptosis. It also interacts with endothelial cells, and inhibits collagen- and ADP-induced platelet aggregation. L-LAAO family effects on platelets are controversial, since it either induces aggregation or inhibits agonist-induced aggregation. These different effects are probably due to different experimental conditions. The chain is L-amino-acid oxidase from Bothrops leucurus (Whitetail lancehead).